A 152-amino-acid chain; its full sequence is Deoxyuridine 5'-triphosphate nucleotidohydrolase (152 aa).

Substrate is bound by residues Arg71–Gly73, Asn84, Leu88–Asp90, and Met98.

It belongs to the dUTPase family. Mg(2+) serves as cofactor.

It carries out the reaction dUTP + H2O = dUMP + diphosphate + H(+). The protein operates within pyrimidine metabolism; dUMP biosynthesis; dUMP from dCTP (dUTP route): step 2/2. Functionally, this enzyme is involved in nucleotide metabolism: it produces dUMP, the immediate precursor of thymidine nucleotides and it decreases the intracellular concentration of dUTP so that uracil cannot be incorporated into DNA. This chain is Deoxyuridine 5'-triphosphate nucleotidohydrolase, found in Shewanella sediminis (strain HAW-EB3).